Here is a 553-residue protein sequence, read N- to C-terminus: Hydroxylamine reductase (553 aa).

[2Fe-2S] cluster contacts are provided by C3, C6, C18, and C25. The hybrid [4Fe-2O-2S] cluster site is built by H252, E276, C320, C408, C436, C461, E495, and K497. At C408 the chain carries Cysteine persulfide.

The protein belongs to the HCP family. [2Fe-2S] cluster is required as a cofactor. It depends on hybrid [4Fe-2O-2S] cluster as a cofactor.

The protein localises to the cytoplasm. It carries out the reaction A + NH4(+) + H2O = hydroxylamine + AH2 + H(+). Catalyzes the reduction of hydroxylamine to form NH(3) and H(2)O. The sequence is that of Hydroxylamine reductase from Vibrio parahaemolyticus serotype O3:K6 (strain RIMD 2210633).